Here is a 137-residue protein sequence, read N- to C-terminus: Active regulator of SIRT1 (137 aa).

Citrulline is present on Arg7. Residues 14-24 show a composition bias toward low complexity; it reads GAPEAPGAAPG. The segment at 14–58 is disordered; it reads GAPEAPGAAPGHTKPSQAPMKRTRKAKATQAQKLRNSAKGKVPKS. Ser84 is subject to Phosphoserine. The interval 96–120 is disordered; sequence RQNRGRKACDRPVTKTKKKKKAEGT.

Belongs to the AROS family. As to quaternary structure, part of the small subunit (SSU) processome, composed of more than 70 proteins and the RNA chaperone small nucleolar RNA (snoRNA) U3. Interacts with RPS19; the interaction is direct and mediates the integration of RPS19 in state post-A1. Interacts with SIRT1. Citrullinated by PADI4.

It is found in the nucleus. The protein resides in the nucleolus. Functionally, part of the small subunit (SSU) processome, first precursor of the small eukaryotic ribosomal subunit. During the assembly of the SSU processome in the nucleolus, many ribosome biogenesis factors, an RNA chaperone and ribosomal proteins associate with the nascent pre-rRNA and work in concert to generate RNA folding, modifications, rearrangements and cleavage as well as targeted degradation of pre-ribosomal RNA by the RNA exosome. Acts as a chaperone that specifically mediates the integration of RPS19 in state post-A1. Direct regulator of SIRT1. Enhances SIRT1-mediated deacetylation of p53/TP53, thereby participating in inhibition of p53/TP53-mediated transcriptional activity. The protein is Active regulator of SIRT1 (RPS19BP1) of Bos taurus (Bovine).